The chain runs to 75 residues: Translational regulator CsrA (75 aa).

It belongs to the CsrA/RsmA family. Homodimer; the beta-strands of each monomer intercalate to form a hydrophobic core, while the alpha-helices form wings that extend away from the core.

It is found in the cytoplasm. Its function is as follows. A translational regulator that binds mRNA to regulate translation initiation and/or mRNA stability. Usually binds in the 5'-UTR at or near the Shine-Dalgarno sequence preventing ribosome-binding, thus repressing translation. Its main target seems to be the major flagellin gene, while its function is anatagonized by FliW. This Treponema denticola (strain ATCC 35405 / DSM 14222 / CIP 103919 / JCM 8153 / KCTC 15104) protein is Translational regulator CsrA.